Here is a 652-residue protein sequence, read N- to C-terminus: Acetyl-coenzyme A synthetase (652 aa).

Residues 191–194, threonine 311, and asparagine 335 each bind CoA; that span reads RAGR. ATP is bound by residues 387 to 389, 411 to 416, aspartate 500, and arginine 515; these read GEP and DTWWQT. Serine 523 lines the CoA pocket. Arginine 526 serves as a coordination point for ATP. 3 residues coordinate Mg(2+): valine 537, histidine 539, and isoleucine 542. Position 584 (arginine 584) interacts with CoA. N6-acetyllysine is present on lysine 609.

It belongs to the ATP-dependent AMP-binding enzyme family. Mg(2+) is required as a cofactor. Acetylated. Deacetylation by the SIR2-homolog deacetylase activates the enzyme.

The catalysed reaction is acetate + ATP + CoA = acetyl-CoA + AMP + diphosphate. Catalyzes the conversion of acetate into acetyl-CoA (AcCoA), an essential intermediate at the junction of anabolic and catabolic pathways. Acs undergoes a two-step reaction. In the first half reaction, Acs combines acetate with ATP to form acetyl-adenylate (AcAMP) intermediate. In the second half reaction, it can then transfer the acetyl group from AcAMP to the sulfhydryl group of CoA, forming the product AcCoA. Its function is as follows. Enables the cell to use acetate during aerobic growth to generate energy via the TCA cycle, and biosynthetic compounds via the glyoxylate shunt. Acetylates CheY, the response regulator involved in flagellar movement and chemotaxis. The sequence is that of Acetyl-coenzyme A synthetase from Yersinia pseudotuberculosis serotype I (strain IP32953).